The chain runs to 233 residues: Large ribosomal subunit protein uL1 (233 aa).

The protein belongs to the universal ribosomal protein uL1 family. Part of the 50S ribosomal subunit.

In terms of biological role, binds directly to 23S rRNA. The L1 stalk is quite mobile in the ribosome, and is involved in E site tRNA release. Functionally, protein L1 is also a translational repressor protein, it controls the translation of the L11 operon by binding to its mRNA. The sequence is that of Large ribosomal subunit protein uL1 from Campylobacter concisus (strain 13826).